A 551-amino-acid chain; its full sequence is L-lactate permease (551 aa).

12 helical membrane passes run asparagine 13–isoleucine 33, leucine 37–phenylalanine 57, valine 70–valine 90, glycine 131–phenylalanine 151, leucine 159–valine 179, methionine 194–methionine 214, phenylalanine 244–leucine 264, phenylalanine 366–tryptophan 386, leucine 405–serine 425, threonine 438–glycine 458, valine 494–valine 514, and isoleucine 530–isoleucine 550.

This sequence belongs to the lactate permease family.

It localises to the cell inner membrane. The catalysed reaction is (S)-lactate(in) + H(+)(in) = (S)-lactate(out) + H(+)(out). It catalyses the reaction (R)-lactate(in) + H(+)(in) = (R)-lactate(out) + H(+)(out). It carries out the reaction glycolate(in) + H(+)(in) = glycolate(out) + H(+)(out). In terms of biological role, uptake of L-lactate across the membrane. Can also transport D-lactate and glycolate. Seems to be driven by a proton motive force. In Escherichia coli O6:H1 (strain CFT073 / ATCC 700928 / UPEC), this protein is L-lactate permease (lldP).